A 356-amino-acid polypeptide reads, in one-letter code: 4-hydroxy-3-methylbut-2-en-1-yl diphosphate synthase (flavodoxin) (356 aa).

Cysteine 264, cysteine 267, cysteine 299, and glutamate 306 together coordinate [4Fe-4S] cluster.

Belongs to the IspG family. [4Fe-4S] cluster is required as a cofactor.

It carries out the reaction (2E)-4-hydroxy-3-methylbut-2-enyl diphosphate + oxidized [flavodoxin] + H2O + 2 H(+) = 2-C-methyl-D-erythritol 2,4-cyclic diphosphate + reduced [flavodoxin]. Its pathway is isoprenoid biosynthesis; isopentenyl diphosphate biosynthesis via DXP pathway; isopentenyl diphosphate from 1-deoxy-D-xylulose 5-phosphate: step 5/6. Its function is as follows. Converts 2C-methyl-D-erythritol 2,4-cyclodiphosphate (ME-2,4cPP) into 1-hydroxy-2-methyl-2-(E)-butenyl 4-diphosphate. This is 4-hydroxy-3-methylbut-2-en-1-yl diphosphate synthase (flavodoxin) from Campylobacter lari (strain RM2100 / D67 / ATCC BAA-1060).